The following is an 84-amino-acid chain: Putative defensin-like protein 38 (84 aa).

The first 26 residues, 1 to 26 (MASSKNGTVLFVSLMILLLISTGVKA), serve as a signal peptide directing secretion. 4 disulfides stabilise this stretch: Cys-28–Cys-84, Cys-41–Cys-65, Cys-50–Cys-76, and Cys-54–Cys-78.

It belongs to the DEFL family.

It localises to the secreted. In Arabidopsis thaliana (Mouse-ear cress), this protein is Putative defensin-like protein 38.